The primary structure comprises 364 residues: DNA polymerase IV (364 aa).

Positions 6 to 186 (IIHIDMDAFY…LPIESFWGVG (181 aa)) constitute a UmuC domain. Residues Asp-10 and Asp-104 each contribute to the Mg(2+) site. Glu-105 is a catalytic residue.

The protein belongs to the DNA polymerase type-Y family. In terms of assembly, monomer. Mg(2+) serves as cofactor.

The protein localises to the cytoplasm. It carries out the reaction DNA(n) + a 2'-deoxyribonucleoside 5'-triphosphate = DNA(n+1) + diphosphate. Poorly processive, error-prone DNA polymerase involved in untargeted mutagenesis. Copies undamaged DNA at stalled replication forks, which arise in vivo from mismatched or misaligned primer ends. These misaligned primers can be extended by PolIV. Exhibits no 3'-5' exonuclease (proofreading) activity. May be involved in translesional synthesis, in conjunction with the beta clamp from PolIII. The sequence is that of DNA polymerase IV from Bacteroides fragilis (strain YCH46).